Consider the following 319-residue polypeptide: HPr kinase/phosphorylase (319 aa).

Residues histidine 137 and lysine 158 contribute to the active site. Residue 152-159 (GDSGVGKS) participates in ATP binding. Residue serine 159 coordinates Mg(2+). Residue aspartate 176 is the Proton acceptor; for phosphorylation activity. Proton donor; for dephosphorylation activity of the active site. Residues 201–210 (MEIRGLGIIN) form an important for the catalytic mechanism of both phosphorylation and dephosphorylation region. Mg(2+) is bound at residue glutamate 202. Arginine 243 is an active-site residue. The segment at 264–269 (PVRPGR) is important for the catalytic mechanism of dephosphorylation.

It belongs to the HPrK/P family. As to quaternary structure, homohexamer. The cofactor is Mg(2+).

The enzyme catalyses [HPr protein]-L-serine + ATP = [HPr protein]-O-phospho-L-serine + ADP + H(+). It catalyses the reaction [HPr protein]-O-phospho-L-serine + phosphate + H(+) = [HPr protein]-L-serine + diphosphate. Its function is as follows. Catalyzes the ATP- as well as the pyrophosphate-dependent phosphorylation of a specific serine residue in HPr, a phosphocarrier protein of the phosphoenolpyruvate-dependent sugar phosphotransferase system (PTS). HprK/P also catalyzes the pyrophosphate-producing, inorganic phosphate-dependent dephosphorylation (phosphorolysis) of seryl-phosphorylated HPr (P-Ser-HPr). This is HPr kinase/phosphorylase (hprK) from Treponema pallidum (strain Nichols).